Reading from the N-terminus, the 874-residue chain is Alanine--tRNA ligase (874 aa).

Zn(2+) is bound by residues His-563, His-567, Cys-665, and His-669.

Belongs to the class-II aminoacyl-tRNA synthetase family. It depends on Zn(2+) as a cofactor.

The protein resides in the cytoplasm. It catalyses the reaction tRNA(Ala) + L-alanine + ATP = L-alanyl-tRNA(Ala) + AMP + diphosphate. Its function is as follows. Catalyzes the attachment of alanine to tRNA(Ala) in a two-step reaction: alanine is first activated by ATP to form Ala-AMP and then transferred to the acceptor end of tRNA(Ala). Also edits incorrectly charged Ser-tRNA(Ala) and Gly-tRNA(Ala) via its editing domain. The protein is Alanine--tRNA ligase of Actinobacillus pleuropneumoniae serotype 5b (strain L20).